We begin with the raw amino-acid sequence, 201 residues long: Orotate phosphoribosyltransferase (201 aa).

113-121 (EDIITTGKS) is a binding site for 5-phospho-alpha-D-ribose 1-diphosphate. 2 residues coordinate orotate: Thr117 and Arg145.

This sequence belongs to the purine/pyrimidine phosphoribosyltransferase family. PyrE subfamily. In terms of assembly, homodimer. The cofactor is Mg(2+).

The catalysed reaction is orotidine 5'-phosphate + diphosphate = orotate + 5-phospho-alpha-D-ribose 1-diphosphate. It functions in the pathway pyrimidine metabolism; UMP biosynthesis via de novo pathway; UMP from orotate: step 1/2. In terms of biological role, catalyzes the transfer of a ribosyl phosphate group from 5-phosphoribose 1-diphosphate to orotate, leading to the formation of orotidine monophosphate (OMP). In Helicobacter pylori (strain P12), this protein is Orotate phosphoribosyltransferase.